Reading from the N-terminus, the 500-residue chain is LEM protein 2 (500 aa).

The LEM domain maps to 1 to 45 (MVDVEKMSDAELRAELNVRGANVGPVTGTTRSLYEKKLKKLLSGG). Over 1–325 (MVDVEKMSDA…VKQTNIFNEA (325 aa)) the chain is Nuclear. The disordered stretch occupies residues 39-202 (KKLLSGGAKT…RRITSVPGLI (164 aa)). The span at 46-57 (AKTPARPTVAKP) shows a compositional bias: low complexity. The span at 58–75 (APKPTPKSAPAPKSPKSP) shows a compositional bias: pro residues. The segment covering 77-89 (ARRSIPRAAATAA) has biased composition (low complexity). Over residues 103–122 (EEMSDSDDDMRDDDDDDEEI) the composition is skewed to acidic residues. Low complexity-rich tracts occupy residues 130–141 (SSFRSANSTASS) and 168–197 (NTPRTTSSSSKTTINTTTTRIPSTPRRITS). A helical membrane pass occupies residues 326-346 (IYFALYVILILFVVLGIAYAL). The Perinuclear space segment spans residues 347–378 (TTTHRPKTADFSGYWGVLKAAGRDSLNFFYNY). The helical transmembrane segment at 379–399 (AILPVVSLGIFVVLGAGIYFG) threads the bilayer. At 400–500 (HRKYKEAKEQ…WIGNQSQKRW (101 aa)) the chain is on the nuclear side.

As to quaternary structure, interacts with lmn-1. Interacts (via LEM domain and the C-terminal nuclear domain) with baf-1. In terms of tissue distribution, ubiquitous. High expression in germline and intestine.

The protein resides in the nucleus inner membrane. The protein localises to the nucleus envelope. It is found in the chromosome. Nuclear lamina-associated inner nuclear membrane protein that is involved in cell division, nuclear structure organization, maintenance of nuclear envelope integrity and nuclear envelope reformation after mitosis. In interphase cells, plays a role in anchoring and spatial arrangement of chromosome arms at the nuclear periphery, forming so-called lem-2 subdomains. Both arms of autosomes but only the left arm of the X chromosome are anchored in lem-2 subdomains; sequences bound by lem-2 are mainly repetitive chromosome sequences and inactive genes. Involved in chromosome segregation and cell division, probably via its interaction with the nuclear intermediate filament protein lmn-1, the main component of nuclear lamina. Required to organize the distribution of lmn-1, nuclear pore complexes (NPCs) and chromatin in mitotically active cells. Involved in the nuclear positioning and efficient anchoring of microtubule-organizing centers (MTOCs) to the nuclear envelope during mitosis as well as on maintaining correct nuclear morphology. Contributes to closure of nuclear envelope (NE) holes and prevents excess nuclear membranes after meiosis and mitosis. Together with emr-1, plays a role in baf-1 enrichment at the nuclear envelope in anaphase. Together with emr-1, involved in muscle cell attachment to hypodermal cells, as well as muscle cell location and sarcomere organization. May play a role in radiation-induced DNA damage repair response. In Caenorhabditis elegans, this protein is LEM protein 2 (lem-2).